Consider the following 273-residue polypeptide: WIMGHMVNNINQIEEFVSLGANSIETDVSFDKKANPEYTYHGTPCDCGRDCLRWEYFKDFLNGLRKATTPGDAKYREKLILVVFDLKTGSLYDNQAYDAGKSLAKNLLEYYWNNGNNGGRAYIVLSIPNLAHYKLVTGFKETLKDEGHEDLLEKVGHDFSGNDDIPDIESAYKKAGVTGHVWQSDGITNCLPRTLKRVILAIANRDSGSGIINKVYYWTVDKRSTTRDSLEAGVDGIMTNYPDVIADVLSEAAYKDKYRIATYDDNPWETFKA.

His5 is an active-site residue. 2 residues coordinate Mg(2+): Glu25 and Asp27. His41 serves as the catalytic Nucleophile. Cystine bridges form between Cys45-Cys51 and Cys47-Cys190. Asp85 serves as a coordination point for Mg(2+).

It belongs to the arthropod phospholipase D family. Class II subfamily. The cofactor is Mg(2+). Expressed by the venom gland.

It localises to the secreted. It carries out the reaction an N-(acyl)-sphingosylphosphocholine = an N-(acyl)-sphingosyl-1,3-cyclic phosphate + choline. The catalysed reaction is an N-(acyl)-sphingosylphosphoethanolamine = an N-(acyl)-sphingosyl-1,3-cyclic phosphate + ethanolamine. It catalyses the reaction a 1-acyl-sn-glycero-3-phosphocholine = a 1-acyl-sn-glycero-2,3-cyclic phosphate + choline. The enzyme catalyses a 1-acyl-sn-glycero-3-phosphoethanolamine = a 1-acyl-sn-glycero-2,3-cyclic phosphate + ethanolamine. Functionally, dermonecrotic toxins cleave the phosphodiester linkage between the phosphate and headgroup of certain phospholipids (sphingolipid and lysolipid substrates), forming an alcohol (often choline) and a cyclic phosphate. This toxin acts on sphingomyelin (SM). It may also act on ceramide phosphoethanolamine (CPE), lysophosphatidylcholine (LPC) and lysophosphatidylethanolamine (LPE), but not on lysophosphatidylserine (LPS), and lysophosphatidylglycerol (LPG). It acts by transphosphatidylation, releasing exclusively cyclic phosphate products as second products. Induces dermonecrosis, hemolysis, increased vascular permeability, edema, inflammatory response, and platelet aggregation. In Loxosceles amazonica (Recluse spider), this protein is Dermonecrotic toxin LamSicTox-alphaIC1.